Reading from the N-terminus, the 245-residue chain is tRNA (guanine-N(1)-)-methyltransferase (245 aa).

Residues glycine 111 and 131–136 (IGDYVL) contribute to the S-adenosyl-L-methionine site.

The protein belongs to the RNA methyltransferase TrmD family. Homodimer.

The protein resides in the cytoplasm. It catalyses the reaction guanosine(37) in tRNA + S-adenosyl-L-methionine = N(1)-methylguanosine(37) in tRNA + S-adenosyl-L-homocysteine + H(+). Specifically methylates guanosine-37 in various tRNAs. The sequence is that of tRNA (guanine-N(1)-)-methyltransferase from Staphylococcus carnosus (strain TM300).